The chain runs to 314 residues: GTPase-interacting component 1 (314 aa).

Disordered regions lie at residues 112–156, 199–221, and 241–261; these read SRRH…KHDV, TMDSHHDGNETNNTPNGNKQLDS, and LGDSVSEKTNPSSPSVSSFSG. The 14-residue stretch at 126–139 folds into the CRIB domain; that stretch reads ISTPFDFHHISHAN. Positions 140–156 are enriched in basic and acidic residues; the sequence is GKREDNPLESHEEKHDV. Residues 208 to 221 show a composition bias toward polar residues; sequence ETNNTPNGNKQLDS. The segment covering 251–260 has biased composition (low complexity); it reads PSSPSVSSFS.

It belongs to the BORG/CEP family. As to quaternary structure, interacts with GTP-bound CDC42.

It is found in the bud neck. Its subcellular location is the bud tip. The protein localises to the cytoplasm. It localises to the cell cortex. The protein resides in the cytoskeleton. Its function is as follows. Required for cell size and shape control, bud site selection, bud emergence, actin cytoskeletal organization, mitotic spindle orientation/positioning, and mating projection formation in response to mating pheromone. In Saccharomyces cerevisiae (strain ATCC 204508 / S288c) (Baker's yeast), this protein is GTPase-interacting component 1 (GIC1).